A 454-amino-acid polypeptide reads, in one-letter code: uncharacterized protein (454 aa).

Residues 1-45 form the TRAM domain; sequence MAAEGKAIAKVNDLVIFVPYVVPGDVVDLQIKRKKNKYAEAEAVK. [4Fe-4S] cluster contacts are provided by cysteine 58, cysteine 64, cysteine 67, and cysteine 160. 4 residues coordinate S-adenosyl-L-methionine: glutamine 286, tyrosine 315, glutamate 336, and aspartate 385. The active-site Nucleophile is the cysteine 412.

The protein belongs to the class I-like SAM-binding methyltransferase superfamily. RNA M5U methyltransferase family.

This is an uncharacterized protein from Bacteroides thetaiotaomicron (strain ATCC 29148 / DSM 2079 / JCM 5827 / CCUG 10774 / NCTC 10582 / VPI-5482 / E50).